The primary structure comprises 60 residues: MDTKLLELLVCPVTKGPLVYDREKQELISRSARLAYPVRDGLPVLLESEARTLTDEELGL.

This sequence belongs to the UPF0434 family.

This chain is UPF0434 protein Bpro_2950, found in Polaromonas sp. (strain JS666 / ATCC BAA-500).